The sequence spans 118 residues: Hydrogenase maturation factor HypA (118 aa).

Histidine 2 provides a ligand contact to Ni(2+). Residues cysteine 73, cysteine 76, cysteine 89, and cysteine 92 each coordinate Zn(2+).

The protein belongs to the HypA/HybF family.

Involved in the maturation of [NiFe] hydrogenases. Required for nickel insertion into the metal center of the hydrogenase. This is Hydrogenase maturation factor HypA from Shewanella sp. (strain MR-7).